A 344-amino-acid polypeptide reads, in one-letter code: MNNAIILGIIWHLVGAASAACFYAPFKQVKKWSWETMWSIGGLVSWLILPWTVSYLLLPDFWQYYGSFSIATLLPVFLFGAMWGIGNINYGLTMRYLGMSMGIGIAIGITLIIGTLMTPILQGRFDVLLGTPGGRMTLLGVFVALIGVAIVSYAGLLKERAMGIQAEEFNLKKGLILAVMCGIFSAGMSFAMDAAKPMHEAASALGINSLYVALPSYVIIMGGGAIINLSYCFIRLATLKNLSVKADFSVAKPLLITNILFSALAGLMWYLQFFFYAWGHAKIPQQYDYMSWMLHMSFYVLCGGIVGLLLKEWKCSTKKPVAVLCIGCLVIILAANIVGLGMAA.

Helical transmembrane passes span 4 to 24 (AIIL…CFYA), 38 to 58 (WSIG…YLLL), 68 to 88 (FSIA…IGNI), 101 to 121 (MGIG…TPIL), 137 to 157 (TLLG…AGLL), 175 to 195 (LILA…MDAA), 207 to 227 (INSL…GAII), 259 to 279 (ILFS…YAWG), 290 to 310 (MSWM…GLLL), and 321 to 341 (VAVL…VGLG).

The protein belongs to the L-rhamnose transporter (TC 2.A.7.6) family.

It localises to the cell inner membrane. It carries out the reaction L-rhamnopyranose(in) + H(+)(in) = L-rhamnopyranose(out) + H(+)(out). Functionally, uptake of L-rhamnose across the cytoplasmic membrane with the concomitant transport of protons into the cell (symport system). The protein is L-rhamnose-proton symporter of Yersinia pseudotuberculosis serotype O:1b (strain IP 31758).